Here is a 323-residue protein sequence, read N- to C-terminus: MDDRVHPEVRRTATEIDTMEIRGAATIADAAARALRTQATESDAADAEAFRAELRATARTLHETRPTAVSLPNALRYVLRDMSSTTVEGLRQSVVDSADEFCARLERAQADLGQVGANRLRDGDTIMTHCHSTDALACVEAAVEQGKHIEAVVKETRPRNQGHITAKRLHELGVPVTLIVDSAARRYLNDVDHVLVGADAVAADGSVINKIGTSGLAVNARERGTPIMVAAQTLKLHPGTMTGHTVDIEMRDTAEVVDDDTLADLGNPTVKNPAFDVTPPRYVDAIVTERGQFPPESIVILMRELFGEGTSEPWAEPSPRAEP.

Substrate contacts are provided by residues 22–25 and Arg-65; that span reads RGAA. Cys-130 serves as the catalytic Proton acceptor. Asp-199 (proton donor) is an active-site residue. Residues 209–210 and Lys-235 contribute to the substrate site; that span reads NK. Lys-210 participates in a covalent cross-link: Glycyl lysine isopeptide (Lys-Gly) (interchain with G-Cter in SAMP2).

The protein belongs to the eIF-2B alpha/beta/delta subunits family. R15P isomerase subfamily.

It catalyses the reaction alpha-D-ribose 1,5-bisphosphate = D-ribulose 1,5-bisphosphate. In terms of biological role, catalyzes the isomerization of ribose 1,5-bisphosphate (R15P) to ribulose 1,5-bisphosphate (RuBP), the CO(2) acceptor and substrate for RubisCO. Functions in an archaeal AMP degradation pathway, together with AMP phosphorylase and RubisCO. The sequence is that of Ribose 1,5-bisphosphate isomerase from Haloferax volcanii (strain ATCC 29605 / DSM 3757 / JCM 8879 / NBRC 14742 / NCIMB 2012 / VKM B-1768 / DS2) (Halobacterium volcanii).